The primary structure comprises 941 residues: Bifunctional glutamine synthetase adenylyltransferase/adenylyl-removing enzyme (941 aa).

The interval 1–431 (MSSAPPFAAA…TFRNAFRLAG (431 aa)) is adenylyl removase. Positions 447-941 (NGHAMRPHAG…DGTIAQAEVK (495 aa)) are adenylyl transferase.

The protein belongs to the GlnE family. It depends on Mg(2+) as a cofactor.

The enzyme catalyses [glutamine synthetase]-O(4)-(5'-adenylyl)-L-tyrosine + phosphate = [glutamine synthetase]-L-tyrosine + ADP. It catalyses the reaction [glutamine synthetase]-L-tyrosine + ATP = [glutamine synthetase]-O(4)-(5'-adenylyl)-L-tyrosine + diphosphate. Functionally, involved in the regulation of glutamine synthetase GlnA, a key enzyme in the process to assimilate ammonia. When cellular nitrogen levels are high, the C-terminal adenylyl transferase (AT) inactivates GlnA by covalent transfer of an adenylyl group from ATP to specific tyrosine residue of GlnA, thus reducing its activity. Conversely, when nitrogen levels are low, the N-terminal adenylyl removase (AR) activates GlnA by removing the adenylyl group by phosphorolysis, increasing its activity. The regulatory region of GlnE binds the signal transduction protein PII (GlnB) which indicates the nitrogen status of the cell. This Bordetella pertussis (strain Tohama I / ATCC BAA-589 / NCTC 13251) protein is Bifunctional glutamine synthetase adenylyltransferase/adenylyl-removing enzyme.